The sequence spans 238 residues: Protein-lysine N-methyltransferase efm4 (238 aa).

The protein belongs to the class I-like SAM-binding methyltransferase superfamily. EFM4 family.

It localises to the cytoplasm. The protein resides in the nucleus. Functionally, S-adenosyl-L-methionine-dependent protein-lysine N-methyltransferase that mono- and dimethylates elongation factor 1-alpha at 'Lys-316'. May play a role in intracellular transport. The sequence is that of Protein-lysine N-methyltransferase efm4 from Schizosaccharomyces pombe (strain 972 / ATCC 24843) (Fission yeast).